The sequence spans 160 residues: S-ribosylhomocysteine lyase (160 aa).

Positions 57, 61, and 127 each coordinate Fe cation.

Belongs to the LuxS family. As to quaternary structure, homodimer. Fe cation serves as cofactor.

The enzyme catalyses S-(5-deoxy-D-ribos-5-yl)-L-homocysteine = (S)-4,5-dihydroxypentane-2,3-dione + L-homocysteine. Involved in the synthesis of autoinducer 2 (AI-2) which is secreted by bacteria and is used to communicate both the cell density and the metabolic potential of the environment. The regulation of gene expression in response to changes in cell density is called quorum sensing. Catalyzes the transformation of S-ribosylhomocysteine (RHC) to homocysteine (HC) and 4,5-dihydroxy-2,3-pentadione (DPD). The polypeptide is S-ribosylhomocysteine lyase (Streptococcus pyogenes serotype M4 (strain MGAS10750)).